We begin with the raw amino-acid sequence, 1196 residues long: RNA-dependent RNA polymerase 6 (1196 aa).

This sequence belongs to the RdRP family. In terms of assembly, interacts with SGS3. Widely expressed.

The protein resides in the cytoplasmic granule. Its subcellular location is the nucleus. The enzyme catalyses RNA(n) + a ribonucleoside 5'-triphosphate = RNA(n+1) + diphosphate. Functionally, RNA-dependent RNA polymerase involved in post-transcriptional gene silencing (PTGS). Possesses ssRNA and ssDNA-dependent polymerase activity, but does not have priming activity. Possesses in vitro 3' nucleotidyltransferase activity in the presence of UTP as single nucleotide. Required for the production of 21 nucleotide trans-acting small interfering RNAs (ta-siRNAs) derived from TAS1, TAS2 and TAS3 endogenous transcripts. Acts in the RDR6/SGS3/DCL4/AGO7 ta-siRNA pathway involved in leaf developmental timing. Required for the production of natural siRNAs (nat-siRNAs) derived from cis-natural antisense transcripts. Required for the production of 24 nucleotide nat-siRNAs derived from the stress-related P5CDH-SRO5 antisense gene pair. Required for PTGS induced by transgene direct repeats. Plays an essential role in transitive silencing of transgenes by processing secondary siRNAs. This pathway, which requires DCL2 and DCL4, amplifies silencing by using the target RNA as substrate to generate secondary siRNAs, providing an efficient mechanism for long-distance silencing. Involved in the biogenesis of secondary siRNAs which require 22 nucleotide miRNAs associated to AGO1. Participates synergistically with AS1 and AS2 to proper plant development by repressing the miR165 and miR166 microRNAs (independently of AGO10) that may lead to mRNA degradation of genes in the class III HD-ZIP family. Required for the production of some small RNAs derived from the crucifer-infecting tobamovirus (TMV-cg). Required for sense virus-induced post-transcriptional gene silencing (S-PTGS). This is RNA-dependent RNA polymerase 6 (RDR6) from Arabidopsis thaliana (Mouse-ear cress).